Here is a 386-residue protein sequence, read N- to C-terminus: D-galactosamine-6-phosphate deaminase AgaS (386 aa).

SIS domains lie at 59–217 (LTPI…CIEM) and 222–366 (LTER…PDNP).

Belongs to the SIS family. AgaS subfamily.

The protein resides in the cytoplasm. The enzyme catalyses D-galactosamine 6-phosphate + H2O = D-tagatopyranose 1-phosphate + NH4(+). The catalysed reaction is alpha-D-glucosamine 6-phosphate + H2O = beta-D-fructose 6-phosphate + NH4(+). Functionally, involved in the pathway of N-acetyl-D-galactosamine degradation. Catalyzes the conversion of D-galactosamine 6-phosphate (GalN-6-P) to D-tagatofuranose 6-phosphate (Tag-6-P). It can also catalyze the conversion of D-glucosamine 6-phosphate. In Shewanella sp. (strain ANA-3), this protein is D-galactosamine-6-phosphate deaminase AgaS.